The chain runs to 473 residues: MIINFLLNSIVGTVKLDENPNINLKNNINNNDNNKENSIEINDYLQTLVKEEDFKNQHTDPNFKFLALRSTKVPIDEYNPENYQLKFVQIITRHGRRTPESKRYPLTMWTCNSLDQLITNKDTSRPDCNMGQLTVLGIVDQINVGKAYRNLFINNLHFLDNKYNKDQIFIRSSNRERTISSARSFMHGLYGGSFADDQEKSPNHSSFLILDEKDENMYPRSSPKYNFLKGLLKKHKAVIEENEKSNLKEFTEKIKNIFEDSKFDTAFYVPSWRSYAGLVNSFDCFRNNGLPLPKGFTNDVIQRMYEESAKEFKSARLFPEMSILGIGRFVNDLTKQMYLKSVNDPSVKDLKLSLYSGHDTTLAALLVAYDMYEDNVHPVTSSALEYLLFQDKNYKEPEVVTKSNEKELINHQYVKVIFNHKPIHIGPCKDKEVDGMCPLSEFLKISQSIIPTNYDEQSKITDEEKNKYIQEST.

His-94 serves as the catalytic Nucleophile. The active-site Proton donor is the Asp-359.

Belongs to the histidine acid phosphatase family.

The enzyme catalyses a phosphate monoester + H2O = an alcohol + phosphate. The protein is Probable acid phosphatase DDB_G0284755 of Dictyostelium discoideum (Social amoeba).